Consider the following 302-residue polypeptide: Transmembrane protein 191C (302 aa).

Disordered regions lie at residues 1–21 (MAATQELLLQLQKDNRDGRQR) and 54–73 (LRRRSQAAQPLQGEAREAAR). The stretch at 5–160 (QELLLQLQKD…EKLQQDALQT (156 aa)) forms a coiled coil. A helical transmembrane segment spans residues 238-258 (VLGALQVLLTLPLLFLGLSLL).

It belongs to the TMEM191 family.

It localises to the membrane. The sequence is that of Transmembrane protein 191C from Homo sapiens (Human).